The following is a 342-amino-acid chain: Lipopolysaccharide heptosyltransferase 1 (342 aa).

Residues Ser188, Ser189, Lys193, Glu225, Asp268, Ser269, Gly270, and His273 each coordinate ADP-L-glycero-beta-D-manno-heptose.

The protein belongs to the glycosyltransferase 9 family.

It localises to the cell inner membrane. The enzyme catalyses an alpha-Kdo-(2-&gt;4)-alpha-Kdo-(2-&gt;6)-lipid A + ADP-L-glycero-beta-D-manno-heptose = an L-alpha-D-Hep-(1-&gt;5)-[alpha-Kdo-(2-&gt;4)]-alpha-Kdo-(2-&gt;6)-lipid A + ADP + H(+). It participates in bacterial outer membrane biogenesis; LPS core biosynthesis. Glycosyltransferase involved in the biosynthesis of the core oligosaccharide region of lipopolysaccharide (LPS). Catalyzes the addition of the first heptose unit to one 3-deoxy-D-manno-octulosonic acid (Kdo) residue of the Kdo2-lipid A module. The chain is Lipopolysaccharide heptosyltransferase 1 from Campylobacter coli.